Reading from the N-terminus, the 276-residue chain is Cruxhalorhodopsin-3 (276 aa).

Residues 1-21 (MPAASTAATTLLQASQSEVLG) constitute a propeptide that is removed on maturation. Residues 22 to 25 (EIQS) lie on the Extracellular side of the membrane. The helical transmembrane segment at 26–51 (NFLLNSSLWVNIALAGVVILLFVAMG) threads the bilayer. Over 52–57 (RELESS) the chain is Cytoplasmic. Residues 58 to 81 (RAKLIWVATMLVPLVSISSYAGLA) form a helical membrane-spanning segment. Residues 82–105 (SGLTVGFLQMPPGHALAGQEVLSP) lie on the Extracellular side of the membrane. The helical transmembrane segment at 106 to 127 (WGRYLTWTFSTPMILLALGLLA) threads the bilayer. The Cytoplasmic portion of the chain corresponds to 128-130 (DTD). A helical transmembrane segment spans residues 131-154 (MASLFTAITMDIGMCITGLAAALV). Over 155–157 (TSS) the chain is Extracellular. Residues 158-180 (HLLRWVFYGISCAFFIAVLYVLL) form a helical membrane-spanning segment. Over 181 to 192 (VEWPADAEAAGT) the chain is Cytoplasmic. Residues 193-216 (SEIFGTLKLLTVVLWLGYPILWAL) form a helical membrane-spanning segment. At 217–225 (GSEGVALLS) the chain is on the extracellular side. The chain crosses the membrane as a helical span at residues 226 to 254 (VGVTSWGYSGLDILAKYVFAFLLLRWVAA). The residue at position 241 (Lys241) is an N6-(retinylidene)lysine. Residues 255–276 (NEDTVTQAGMSLGSGGAAPADD) are Cytoplasmic-facing.

It belongs to the archaeal/bacterial/fungal opsin family.

Its subcellular location is the cell membrane. In terms of biological role, light-driven chloride pump. The sequence is that of Cruxhalorhodopsin-3 (choP3) from Haloarcula vallismortis (Halobacterium vallismortis).